Reading from the N-terminus, the 1066-residue chain is Beta-galactosidase (1066 aa).

Residues asparagine 110 and aspartate 209 each coordinate substrate. Aspartate 209 is a Na(+) binding site. Residues glutamate 432, histidine 434, and glutamate 477 each coordinate Mg(2+). Residues glutamate 477 and 553 to 556 contribute to the substrate site; that span reads EYAH. Glutamate 477 serves as the catalytic Proton donor. The Nucleophile role is filled by glutamate 553. A Mg(2+)-binding site is contributed by asparagine 613. Residues phenylalanine 617 and asparagine 620 each contribute to the Na(+) site. Substrate-binding residues include asparagine 620 and tryptophan 1041.

The protein belongs to the glycosyl hydrolase 2 family. Homotetramer. Requires Mg(2+) as cofactor. Na(+) is required as a cofactor.

The enzyme catalyses Hydrolysis of terminal non-reducing beta-D-galactose residues in beta-D-galactosides.. This is Beta-galactosidase from Yersinia pseudotuberculosis serotype O:1b (strain IP 31758).